Reading from the N-terminus, the 161-residue chain is MPIDQEKLAKLQKLSANNKVGGTRRKLAKKSGTASANKDDSKLQAQLAKLKAVTMDQVEEANFFKDDGSVLHFNKVGVQVAPQHNTSVFYGIPQEKSLQDLFPSIIPQLGSESIDALTQLATQLQNAQAAAPATEGHEAGEKKDNDIPELIEGQSFDADVE.

Disordered stretches follow at residues 14–41 (LSAN…KDDS) and 125–161 (QNAQ…ADVE). The 66-residue stretch at 37–102 (NKDDSKLQAQ…PQEKSLQDLF (66 aa)) folds into the NAC-A/B domain. The span at 125–134 (QNAQAAAPAT) shows a compositional bias: low complexity. A compositionally biased stretch (basic and acidic residues) spans 135-146 (EGHEAGEKKDND).

This sequence belongs to the NAC-beta family. In terms of assembly, part of the nascent polypeptide-associated complex (NAC), consisting of EGD2 and EGD1. NAC associates with ribosomes via EGD1.

The protein localises to the cytoplasm. Its subcellular location is the nucleus. Its function is as follows. Component of the nascent polypeptide-associated complex (NAC), a dynamic component of the ribosomal exit tunnel, protecting the emerging polypeptides from interaction with other cytoplasmic proteins to ensure appropriate nascent protein targeting. The NAC complex also promotes mitochondrial protein import by enhancing productive ribosome interactions with the outer mitochondrial membrane and blocks the inappropriate interaction of ribosomes translating non-secretory nascent polypeptides with translocation sites in the membrane of the endoplasmic reticulum. EGD1 may act as a transcription factor that exert a negative effect on the expression of several genes that are transcribed by RNA polymerase II. The polypeptide is Nascent polypeptide-associated complex subunit beta (EGD1) (Eremothecium gossypii (strain ATCC 10895 / CBS 109.51 / FGSC 9923 / NRRL Y-1056) (Yeast)).